The sequence spans 93 residues: Chaperone NapD (93 aa).

Belongs to the NapD family. As to quaternary structure, interacts with the cytoplasmic NapA precursor.

Its subcellular location is the cytoplasm. In terms of biological role, chaperone for NapA, the catalytic subunit of the periplasmic nitrate reductase. It binds directly and specifically to the twin-arginine signal peptide of NapA, preventing premature interaction with the Tat translocase and premature export. This Haemophilus influenzae (strain ATCC 51907 / DSM 11121 / KW20 / Rd) protein is Chaperone NapD.